The chain runs to 113 residues: Mitochondrial import inner membrane translocase subunit TIM14 (113 aa).

At 1-4 (MATP) the chain is on the mitochondrial intermembrane side. Residues 5–22 (IIVGATIAGIAYSSRFLI) traverse the membrane as a helical segment. At 23–113 (RVIQRAKSKQ…RNVLSSKNSN (91 aa)) the chain is on the mitochondrial matrix side. In terms of domain architecture, J spans 59–113 (EAANILGLKEESTKEEIKIRHKLLMIKNHPDKGGSSYLATKINEARNVLSSKNSN).

Belongs to the TIM14 family. As to quaternary structure, interacts with PHB2; the interaction associates DNAJC19 with the prohibitin complex. Interacts with TIMM16/PAM16. May be a component of the PAM complex at least composed of a mitochondrial HSP70 protein, GRPEL1 or GRPEL2, TIMM44, TIMM16/PAM16 and TIMM14/DNAJC19.

The protein resides in the mitochondrion inner membrane. In terms of biological role, mitochondrial co-chaperone which forms a complex with prohibitins to regulate cardiolipin remodeling. May be a component of the PAM complex, a complex required for the translocation of transit peptide-containing proteins from the inner membrane into the mitochondrial matrix in an ATP-dependent manner. May act as a co-chaperone that stimulate the ATP-dependent activity. The sequence is that of Mitochondrial import inner membrane translocase subunit TIM14 (dnajc19) from Dictyostelium discoideum (Social amoeba).